Here is a 109-residue protein sequence, read N- to C-terminus: Biphenyl dioxygenase system ferredoxin subunit (109 aa).

Residues 4-100 form the Rieske domain; that stretch reads TRVCDRRDVP…IRIEDNDVLV (97 aa). [2Fe-2S] cluster is bound by residues C43, H45, C63, and H66.

The protein belongs to the bacterial ring-hydroxylating dioxygenase ferredoxin component family. This dioxygenase system consists of four proteins: the two subunits of the hydroxylase component (BphA and BphE), a ferredoxin (BphF) and a ferredoxin reductase (BphG).

In terms of biological role, this protein seems to be a 2Fe-2S ferredoxin. The protein is Biphenyl dioxygenase system ferredoxin subunit (bphF) of Paraburkholderia xenovorans (strain LB400).